A 173-amino-acid polypeptide reads, in one-letter code: Protein tyrosine phosphatase type IVA 1 (173 aa).

The Tyrosine-protein phosphatase domain maps to 8 to 161; the sequence is APVEVTYKNM…YRPKMRLRFK (154 aa). Cys-49 and Cys-104 form a disulfide bridge. Asp-72 serves as the catalytic Proton donor. The tract at residues 97-132 is interaction with ATF5; sequence GCCIAVHCVAGLGRAPVLVALALIEGGMKYEDAVQF. Cys-104 (phosphocysteine intermediate) is an active-site residue. 105–110 contributes to the phosphate binding site; the sequence is VAGLGR. Arg-110 provides a ligand contact to substrate. Cys-170 carries the post-translational modification Cysteine methyl ester. Cys-170 carries the S-farnesyl cysteine lipid modification. A propeptide spans 171–173 (removed in mature form); the sequence is CIQ.

This sequence belongs to the protein-tyrosine phosphatase family. Homotrimer. Interacts with ATF5 and tubulin. In terms of processing, farnesylated. Farnesylation is required for membrane targeting.

The protein resides in the cell membrane. It is found in the early endosome. It localises to the endoplasmic reticulum. Its subcellular location is the cytoplasm. The protein localises to the cytoskeleton. The protein resides in the spindle. It is found in the nucleus. The catalysed reaction is O-phospho-L-tyrosyl-[protein] + H2O = L-tyrosyl-[protein] + phosphate. With respect to regulation, inhibited by sodium orthovanadate and pentamidine. In terms of biological role, protein tyrosine phosphatase which stimulates progression from G1 into S phase during mitosis. May play a role in the development and maintenance of differentiating epithelial tissues. The polypeptide is Protein tyrosine phosphatase type IVA 1 (PTP4A1) (Pongo abelii (Sumatran orangutan)).